We begin with the raw amino-acid sequence, 124 residues long: Small ribosomal subunit protein uS12 (124 aa).

Residues 1–22 are disordered; the sequence is MATINQLVRKPRSRKVAKSDVP. Residue D89 is modified to 3-methylthioaspartic acid. A disordered region spans residues 104-124; that stretch reads TAGVNDRRQGRSKYGAKRGKS. The segment covering 113 to 124 has biased composition (basic residues); sequence GRSKYGAKRGKS.

Belongs to the universal ribosomal protein uS12 family. Part of the 30S ribosomal subunit. Contacts proteins S8 and S17. May interact with IF1 in the 30S initiation complex.

Its function is as follows. With S4 and S5 plays an important role in translational accuracy. In terms of biological role, interacts with and stabilizes bases of the 16S rRNA that are involved in tRNA selection in the A site and with the mRNA backbone. Located at the interface of the 30S and 50S subunits, it traverses the body of the 30S subunit contacting proteins on the other side and probably holding the rRNA structure together. The combined cluster of proteins S8, S12 and S17 appears to hold together the shoulder and platform of the 30S subunit. The polypeptide is Small ribosomal subunit protein uS12 (Hahella chejuensis (strain KCTC 2396)).